A 252-amino-acid chain; its full sequence is MWIGLISIFPDMFRAVMDYGVTGRAVKKGLLQVHCWNPRAFSHNRHQTVDDRPYGGGPGMLLMMQPLRDAIHEAKNHTETGVKVIYLSPQGRKLDQQGVYELAANKKLILICGRYKGIDERLITTEIDEEWSIGDYVLSGGELAAMILIDSMTRLIPGALSHESSAVEDSFAQGLLDCPHYTRPEVLYGIKVPPVLLSGHHANIRRWRLKQSLGRTWLRRPELLNNLYLTHEQVRLLKEFQYEYNNLIESQV.

Residues Gly113 and 133-138 (IGDYVL) each bind S-adenosyl-L-methionine.

It belongs to the RNA methyltransferase TrmD family. As to quaternary structure, homodimer.

The protein localises to the cytoplasm. The enzyme catalyses guanosine(37) in tRNA + S-adenosyl-L-methionine = N(1)-methylguanosine(37) in tRNA + S-adenosyl-L-homocysteine + H(+). In terms of biological role, specifically methylates guanosine-37 in various tRNAs. This is tRNA (guanine-N(1)-)-methyltransferase from Baumannia cicadellinicola subsp. Homalodisca coagulata.